A 140-amino-acid chain; its full sequence is Large ribosomal subunit protein uL11 (140 aa).

The protein belongs to the universal ribosomal protein uL11 family. Part of the ribosomal stalk of the 50S ribosomal subunit. Interacts with L10 and the large rRNA to form the base of the stalk. L10 forms an elongated spine to which L12 dimers bind in a sequential fashion forming a multimeric L10(L12)X complex. One or more lysine residues are methylated.

Its function is as follows. Forms part of the ribosomal stalk which helps the ribosome interact with GTP-bound translation factors. This Staphylococcus epidermidis (strain ATCC 35984 / DSM 28319 / BCRC 17069 / CCUG 31568 / BM 3577 / RP62A) protein is Large ribosomal subunit protein uL11.